A 382-amino-acid chain; its full sequence is D-galactonate dehydratase (382 aa).

Mg(2+) is bound at residue D183. Residue H185 is the Proton donor of the active site. 2 residues coordinate Mg(2+): E209 and E235. H285 functions as the Proton acceptor in the catalytic mechanism.

The protein belongs to the mandelate racemase/muconate lactonizing enzyme family. GalD subfamily. It depends on Mg(2+) as a cofactor.

The enzyme catalyses D-galactonate = 2-dehydro-3-deoxy-D-galactonate + H2O. It participates in carbohydrate acid metabolism; D-galactonate degradation; D-glyceraldehyde 3-phosphate and pyruvate from D-galactonate: step 1/3. In terms of biological role, catalyzes the dehydration of D-galactonate to 2-keto-3-deoxy-D-galactonate. This Cronobacter sakazakii (strain ATCC BAA-894) (Enterobacter sakazakii) protein is D-galactonate dehydratase.